Here is a 420-residue protein sequence, read N- to C-terminus: Acetylornithine aminotransferase (420 aa).

Residues Gly118–Ala119 and Phe151 each bind pyridoxal 5'-phosphate. Arg154 is a binding site for N(2)-acetyl-L-ornithine. Residue Asp242–Gln245 participates in pyridoxal 5'-phosphate binding. The residue at position 271 (Lys271) is an N6-(pyridoxal phosphate)lysine. Ser298 contacts N(2)-acetyl-L-ornithine. Residue Thr299 participates in pyridoxal 5'-phosphate binding.

This sequence belongs to the class-III pyridoxal-phosphate-dependent aminotransferase family. ArgD subfamily. As to quaternary structure, homodimer. Requires pyridoxal 5'-phosphate as cofactor.

Its subcellular location is the cytoplasm. The enzyme catalyses N(2)-acetyl-L-ornithine + 2-oxoglutarate = N-acetyl-L-glutamate 5-semialdehyde + L-glutamate. It functions in the pathway amino-acid biosynthesis; L-arginine biosynthesis; N(2)-acetyl-L-ornithine from L-glutamate: step 4/4. This is Acetylornithine aminotransferase from Parasynechococcus marenigrum (strain WH8102).